Consider the following 746-residue polypeptide: MLVLGLLVAGAADGCELVPRHLRGRRATGSAATAASSPAAAAGDSPALMTDPCMSLSPPCFTEEDRFSLEALQTIHKQMDDDKDGGIEVEESDEFIREDMKYKDATNKHSHLHREDKHITIEDLWKRWKTSEVHNWTLEDTLQWLIEFVELPQYEKNFRDNNVKGTTLPRIAVHEPSFMISQLKISDRSHRQKLQLKALDVVLFGPLTRPPHNWMKDFILTVSIVIGVGGCWFAYTQNKTSKEHVAKMMKDLESLQTAEQSLMDLQERLEKAQEENRNVAVEKQNLERKMMDEINYAKEEACRLRELREGAECELSRRQYAEQELEQVRMALKKAEKEFELRSSWSVPDALQKWLQLTHEVEVQYYNIKRQNAEMQLAIAKDEAEKIKKKRSTVFGTLHVAHSSSLDEVDHKILEAKKALSELTTCLRERLFRWQQIEKICGFQIAHNSGLPSLTSSLYSDHSWVVMPRVSIPPYPIAGGVDDLDEDTPPIVSQFPGTMAKPPGSLARSSSLCRSRRSIVPSSPQPQRAQLAPHAPHPSHPRHPHHPQHTPHSLPSPDPDILSVSSCPALYRNEEEEEAIYFSAEKQWEVPDTASECDSLNSSIGRKQSPPLSLEIYQTLSPRKISRDEVSLEDSSRGDSPVTVDVSWGSPDCVGLTETKSMIFSPASKVYNGILEKSCSMNQLSSGIPVPKPRHTSCSSAGNDSKPVQEAPSVARISSIPHDLCHNGEKSKKPSKIKSLFKKKSK.

A signal peptide spans 1–14 (MLVLGLLVAGAADG). Over 15–218 (CELVPRHLRG…RPPHNWMKDF (204 aa)) the chain is Extracellular. The EF-hand domain occupies 67–102 (FSLEALQTIHKQMDDDKDGGIEVEESDEFIREDMKY). Positions 80, 82, 84, and 91 each coordinate Ca(2+). A glycan (N-linked (GlcNAc...) asparagine) is linked at Asn-135. The 69-residue stretch at 136–204 (WTLEDTLQWL…QLKALDVVLF (69 aa)) folds into the SAM domain. The helical transmembrane segment at 219 to 235 (ILTVSIVIGVGGCWFAY) threads the bilayer. The Cytoplasmic segment spans residues 236-746 (TQNKTSKEHV…IKSLFKKKSK (511 aa)). The stretch at 247-394 (KMMKDLESLQ…EKIKKKRSTV (148 aa)) forms a coiled coil. Positions 483-562 (DLDEDTPPIV…SLPSPDPDIL (80 aa)) are disordered. Residue Ser-523 is modified to Phosphoserine. Basic residues predominate over residues 537–549 (HPSHPRHPHHPQH). Phosphoserine occurs at positions 609, 621, 640, 650, 661, 665, 680, and 697. A disordered region spans residues 685–746 (SSGIPVPKPR…IKSLFKKKSK (62 aa)). The segment covering 723 to 732 (DLCHNGEKSK) has biased composition (basic and acidic residues). Basic residues predominate over residues 733–746 (KPSKIKSLFKKKSK).

In terms of assembly, oligomer with STIM1. Interacts with ORAI1. In terms of processing, glycosylated. Post-translationally, phosphorylated predominantly on Ser residues. Expressed in all tissues and tumor cell lines examined.

Its subcellular location is the endoplasmic reticulum membrane. In terms of biological role, plays a role in mediating store-operated Ca(2+) entry (SOCE), a Ca(2+) influx following depletion of intracellular Ca(2+) stores. Functions as a highly sensitive Ca(2+) sensor in the endoplasmic reticulum which activates both store-operated and store-independent Ca(2+)-influx. Regulates basal cytosolic and endoplasmic reticulum Ca(2+) concentrations. Upon mild variations of the endoplasmic reticulum Ca(2+) concentration, translocates from the endoplasmic reticulum to the plasma membrane where it probably activates the Ca(2+) release-activated Ca(2+) (CRAC) channels ORAI1, ORAI2 and ORAI3. May inhibit STIM1-mediated Ca(2+) influx. The polypeptide is Stromal interaction molecule 2 (STIM2) (Homo sapiens (Human)).